Here is a 429-residue protein sequence, read N- to C-terminus: Chaperone SurA (429 aa).

Positions 1–18 (MFKRIALVCALFSGVCFA) are cleaved as a signal peptide. PpiC domains lie at 170–271 (NLTY…KLVA) and 281–380 (ITQT…EVIA).

It is found in the periplasm. It carries out the reaction [protein]-peptidylproline (omega=180) = [protein]-peptidylproline (omega=0). Chaperone involved in the correct folding and assembly of outer membrane proteins. Recognizes specific patterns of aromatic residues and the orientation of their side chains, which are found more frequently in integral outer membrane proteins. May act in both early periplasmic and late outer membrane-associated steps of protein maturation. The protein is Chaperone SurA of Legionella pneumophila subsp. pneumophila (strain Philadelphia 1 / ATCC 33152 / DSM 7513).